Here is a 906-residue protein sequence, read N- to C-terminus: MESRIWCLVVCVNLCIVCLGAAVSSSSTSHATSSTHNGSHTSRTTSAQTRSVYSQHVTSSEAVSHRANETIYNTTLKYGDVVGVNTTKYPYRVCSMAQGTDLIRFERNIICTSMKPINEDLDEGIMVVYKRNIVAHTFKVRVYQKVLTFRRSYAYIYTTYLLGSNTEYVAPPMWEIHHINKFAQCYSSYSRVIGGTVFVAYHRDSYENKTMQLIPDDYSNTHSTRYVTVKDQWHSRGSTWLYRETCNLNCMLTITTARSKYPYHFFATSTGDVVYISPFYNGTNRNASYFGENADKFFIFPNYTIVSDFGRPNAAPETHRLVAFLERADSVISWDIQDEKNVTCQLTFWEASERTIRSEAEDSYHFSSAKMTATFLSKKQEVNMSDSALDCVRDEAINKLQQIFNTSYNQTYEKYGNVSVFETSGGLVVFWQGIKQKSLVELERLANRSSLNITHRTRRSTSDNNTTHLSSMESVHNLVYAQLQFTYDTLRGYINRALAQIAEAWCVDQRRTLEVFKELSKINPSAILSAIYNKPIAARFMGDVLGLASCVTINQTSVKVLRDMNVKESPGRCYSRPVVIFNFANSSYVQYGQLGEDNEILLGNHRTEECQLPSLKIFIAGNSAYEYVDYLFKRMIDLSSISTVDSMIALDIDPLENTDFRVLELYSQKELRSSNVFDLEEIMREFNSYKQRVKYVEDKVVDPLPPYLKGLDDLMSGLGAAGKAVGVAIGAVGGAVASVVEGVATFLKNPFGAFTIILVAIAVVIITYLIYTRQRRLCTQPLQNLFPYLVSADGTTVTSGSTKDTSLQAPPSYEESVYNSGRKGPGPPSSDASTAAPPYTNEQAYQMLLALARLDAEQRAQQNGTDSLDGQTGTQDKGQKPNLLDRLRHRKNGYRHLKDSDEEENV.

A signal peptide spans 1–31; the sequence is MESRIWCLVVCVNLCIVCLGAAVSSSSTSHA. Residues 29–46 show a composition bias toward low complexity; that stretch reads SHATSSTHNGSHTSRTTS. A disordered region spans residues 29–51; that stretch reads SHATSSTHNGSHTSRTTSAQTRS. The Virion surface portion of the chain corresponds to 32–750; the sequence is TSSTHNGSHT…EGVATFLKNP (719 aa). 4 N-linked (GlcNAc...) asparagine; by host glycosylation sites follow: N37, N68, N73, and N85. Cystine bridges form between C94–C550, C111–C506, C185–C250, C246–C250, and C344–C391. Residues 152 to 158 form an involved in fusion and/or binding to host membrane region; sequence SYAYIYT. N208 is a glycosylation site (N-linked (GlcNAc...) asparagine; by host). Positions 237–244 are involved in fusion and/or binding to host membrane; the sequence is GSTWLYRE. Residues N281, N286, N302, N341, N383, N405, N409, N417, N447, N452, N464, N465, N554, and N585 are each glycosylated (N-linked (GlcNAc...) asparagine; by host). C573 and C610 are oxidised to a cystine. Hydrophobic membrane proximal region stretches follow at residues 696–748 and 727–747; these read VEDK…TFLK and VAIG…ATFL. The helical transmembrane segment at 751-771 threads the bilayer; the sequence is FGAFTIILVAIAVVIITYLIY. At 772-906 the chain is on the intravirion side; sequence TRQRRLCTQP…LKDSDEEENV (135 aa). 2 stretches are compositionally biased toward polar residues: residues 797 to 809 and 859 to 876; these read VTSG…SLQA and RAQQ…GTQD. Disordered regions lie at residues 797 to 837 and 856 to 906; these read VTSG…TAAP and AEQR…EENV. Residues 877–886 show a composition bias toward basic and acidic residues; it reads KGQKPNLLDR. The Internalization motif signature appears at 894–897; it reads YRHL.

This sequence belongs to the herpesviridae glycoprotein B family. In terms of assembly, homotrimer; disulfide-linked. Binds to heparan sulfate proteoglycans. Interacts with gH/gL heterodimer. Interacts with host TLR1 and TLR2. Interacts with host C-type lectin CD209/DC-SIGN. Interacts with host ITGB1, EGFR, and PDGFRA. Post-translationally, a proteolytic cleavage by host furin generates two subunits that remain linked by disulfide bonds.

It is found in the virion membrane. The protein resides in the host cell membrane. The protein localises to the host endosome membrane. Its subcellular location is the host Golgi apparatus membrane. Functionally, envelope glycoprotein that plays a role in host cell entry, cell to-cell virus transmission, and fusion of infected cells. May be involved in the initial attachment via binding to heparan sulfate together with the gM/gN complex that binds heparin with higher affinity. Interacts with host integrin ITGB1, PDGFRA and EGFR that likely serve as postattachment entry receptors. Also participates in the fusion of viral and cellular membranes leading to virus entry into the host cell. Membrane fusion is mediated by the fusion machinery composed at least of gB and the heterodimer gH/gL. The chain is Envelope glycoprotein B from Human cytomegalovirus (strain AD169) (HHV-5).